Here is a 255-residue protein sequence, read N- to C-terminus: GSTWPSRCHSTLLGDRPHFIQPAPNRVDLLFKDIPESATGLYVFVLLYNGHPEAWTYTLLSTANHFMNVLTDRTRPRLGEHFYTDHGHQLFTPHPSEATTQELGAWTRHYLAFLLIIICTCAALLIALVVWGCILYIRSNRKPYEVLNPFETVYTSVPSNDPTDEVLVFERLASDSDDSFDSSSDEELELPQPPPAAQLQPYSSLESADASRGRSGFKVWFRDTPEASPEPLHRPTPPVGPDYSKVASKLRSILK.

Residues 1–110 (GSTWPSRCHS…QELGAWTRHY (110 aa)) are Virion surface-facing. A helical transmembrane segment spans residues 111–131 (LAFLLIIICTCAALLIALVVW). The Intravirion portion of the chain corresponds to 132 to 255 (GCILYIRSNR…VASKLRSILK (124 aa)). Positions 154 to 157 (YTSV) match the Internalization motif motif. Residues 173–187 (ASDSDDSFDSSSDEE) are acidic. Residues 176-189 (SDDSFDSSSDEELE) are compositionally biased toward acidic residues. 2 disordered regions span residues 176 to 210 (SDDS…SADA) and 223 to 245 (DTPE…DYSK).

This sequence belongs to the alphaherpesvirinae glycoprotein E family. In terms of assembly, interacts with gI. Phosphorylated on serines within the acidic cluster. Phosphorylation determines whether endocytosed viral gE traffics to the trans-Golgi network or recycles to the cell membrane.

Its subcellular location is the virion membrane. The protein resides in the host cell membrane. It localises to the host cell junction. It is found in the host Golgi apparatus membrane. The protein localises to the host endosome membrane. In epithelial cells, the heterodimer gE/gI is required for the cell-to-cell spread of the virus, by sorting nascent virions to cell junctions. Once the virus reaches the cell junctions, virus particles can spread to adjacent cells extremely rapidly through interactions with cellular receptors that accumulate at these junctions. Implicated in basolateral spread in polarized cells. In neuronal cells, gE/gI is essential for the anterograde spread of the infection throughout the host nervous system. Together with US9, the heterodimer gE/gI is involved in the sorting and transport of viral structural components toward axon tips. This chain is Envelope glycoprotein E (gE), found in Equus caballus (Horse).